Here is an 85-residue protein sequence, read N- to C-terminus: Large ribosomal subunit protein bL27 (85 aa).

The protein belongs to the bacterial ribosomal protein bL27 family.

This Mycobacteroides abscessus (strain ATCC 19977 / DSM 44196 / CCUG 20993 / CIP 104536 / JCM 13569 / NCTC 13031 / TMC 1543 / L948) (Mycobacterium abscessus) protein is Large ribosomal subunit protein bL27.